A 164-amino-acid chain; its full sequence is MIRVGQGFDAHRFGEPGTPLILGGVQVPHERGLAAHSDGDVLMHAVTDGLLGAAGEGDLGTHFPDSDDAYKGIDSRILLRDALQRVRAGGWRVVNVDATLIAQAPRMNPHVGAMRDHLAADLEVAPSAVNVKATTTERMGFPGRGEGIAAMAVVLIARDGFFEH.

The a divalent metal cation site is built by aspartate 9 and histidine 11. 4-CDP-2-C-methyl-D-erythritol 2-phosphate is bound by residues 9–11 (DAH) and 36–37 (HS). Position 44 (histidine 44) interacts with a divalent metal cation. Residues 58-60 (DLG), 63-67 (FPDSD), 134-137 (TTTE), phenylalanine 141, and arginine 144 contribute to the 4-CDP-2-C-methyl-D-erythritol 2-phosphate site.

This sequence belongs to the IspF family. Homotrimer. A divalent metal cation serves as cofactor.

The catalysed reaction is 4-CDP-2-C-methyl-D-erythritol 2-phosphate = 2-C-methyl-D-erythritol 2,4-cyclic diphosphate + CMP. The protein operates within isoprenoid biosynthesis; isopentenyl diphosphate biosynthesis via DXP pathway; isopentenyl diphosphate from 1-deoxy-D-xylulose 5-phosphate: step 4/6. Involved in the biosynthesis of isopentenyl diphosphate (IPP) and dimethylallyl diphosphate (DMAPP), two major building blocks of isoprenoid compounds. Catalyzes the conversion of 4-diphosphocytidyl-2-C-methyl-D-erythritol 2-phosphate (CDP-ME2P) to 2-C-methyl-D-erythritol 2,4-cyclodiphosphate (ME-CPP) with a corresponding release of cytidine 5-monophosphate (CMP). The polypeptide is 2-C-methyl-D-erythritol 2,4-cyclodiphosphate synthase (Alkalilimnicola ehrlichii (strain ATCC BAA-1101 / DSM 17681 / MLHE-1)).